The following is a 410-amino-acid chain: MGSLGTMLRYPDDIYPLLKMKRAIEKAEKQIPPEPHWGFCYSMLHKVSRSFSLVIQQLNTELRNAVCVFYLVLRALDTVEDDTSIPTDEKVPILIAFHRHIYDTDWHYSCGTKEYKILMDQFHHVSAAFLELEKGYQEAIEEITRRMGAGMAKFICQEVETVDDYDEYCHYVAGLVGLGLSKLFLAAGSEVLTPDWEAISNSMGLFLQKTNIIRDYLEDINEIPKSRMFWPREIWGKYADKLEDLKYEENTNKSVQCLNEMVTNALMHIEDCLKYMVSLRDPSIFRFCAIPQIMAIGTLALCYNNEQVFRGVVKLRRGLTAKVIDRTKTMADVYGAFYDFSCMLKTKVDKNDPNASKTLNRLEAVQKLCRDAGVLQNRKSYVNDKGQPNSVFIIMVVILLAIVFAYLRAN.

At G2 the chain carries N-acetylglycine. Transmembrane regions (helical) follow at residues 283–303 (SIFRFCAIPQIMAIGTLALCY) and 387–407 (QPNSVFIIMVVILLAIVFAYL).

Belongs to the phytoene/squalene synthase family. The cofactor is Mg(2+). It depends on Mn(2+) as a cofactor. As to expression, expressed in all tissues analyzed (seedlings, cotyledons, inflorescences, siliques, leaves, stems and roots). Highly expressed in roots and pollen.

The protein resides in the endoplasmic reticulum membrane. The catalysed reaction is 2 (2E,6E)-farnesyl diphosphate + NADPH + H(+) = squalene + 2 diphosphate + NADP(+). The enzyme catalyses 2 (2E,6E)-farnesyl diphosphate + NADH + H(+) = squalene + 2 diphosphate + NAD(+). The protein operates within terpene metabolism; lanosterol biosynthesis; lanosterol from farnesyl diphosphate: step 1/3. The protein is Squalene synthase 1 of Arabidopsis thaliana (Mouse-ear cress).